The chain runs to 376 residues: Heptahelical transmembrane protein ADIPOR1 (376 aa).

The Cytoplasmic portion of the chain corresponds to 1-90 (MGEEAAMATM…LSLFSWHNET (90 aa)). The tract at residues 20 to 46 (PAAAPAPAKGGGSKKKRKQQKREEKRK) is disordered. Residues 91–111 (INIWTHLLGFVLFFGLTVLHL) traverse the membrane as a helical segment. Over 112-179 (GQYFPQVADL…AAAAATTRWP (68 aa)) the chain is Extracellular. Residues 180-200 (FFVFLAGAMFCLLSSAACHLL) form a helical membrane-spanning segment. Residues 201–216 (SCHSHRLNLFLIRLDY) are Cytoplasmic-facing. The helical transmembrane segment at 217-237 (TGIAVMIVVSFFPPIYYIFQC) threads the bilayer. Residues 238 to 240 (EPR) lie on the Extracellular side of the membrane. A helical membrane pass occupies residues 241 to 261 (WQVVYLSAITAAGVATVYALM). Residues 262 to 274 (SPRLSAARYRAHR) lie on the Cytoplasmic side of the membrane. The helical transmembrane segment at 275–295 (ALLFVAMGLSGVVPAAHAVAV) threads the bilayer. At 296-303 (NWHEPRRN) the chain is on the extracellular side. The helical transmembrane segment at 304 to 324 (VTLAYEGAMAASYLAGTAFYL) threads the bilayer. At 325 to 344 (TRVPERWRPGMFDLCGHSHQ) the chain is on the cytoplasmic side. Residues 345–365 (IFHALVIAGALAHYAAAIVFI) traverse the membrane as a helical segment. Residues 366–376 (QARDEMGCPAP) lie on the Extracellular side of the membrane.

It belongs to the ADIPOR family.

Its subcellular location is the membrane. In terms of biological role, may play a role in abiotic stress response. The protein is Heptahelical transmembrane protein ADIPOR1 (ADIPOR1) of Oryza sativa subsp. japonica (Rice).